Consider the following 252-residue polypeptide: Imidazole glycerol phosphate synthase subunit HisF (252 aa).

Residues Asp13 and Asp132 contribute to the active site.

This sequence belongs to the HisA/HisF family. Heterodimer of HisH and HisF.

Its subcellular location is the cytoplasm. The enzyme catalyses 5-[(5-phospho-1-deoxy-D-ribulos-1-ylimino)methylamino]-1-(5-phospho-beta-D-ribosyl)imidazole-4-carboxamide + L-glutamine = D-erythro-1-(imidazol-4-yl)glycerol 3-phosphate + 5-amino-1-(5-phospho-beta-D-ribosyl)imidazole-4-carboxamide + L-glutamate + H(+). It participates in amino-acid biosynthesis; L-histidine biosynthesis; L-histidine from 5-phospho-alpha-D-ribose 1-diphosphate: step 5/9. IGPS catalyzes the conversion of PRFAR and glutamine to IGP, AICAR and glutamate. The HisF subunit catalyzes the cyclization activity that produces IGP and AICAR from PRFAR using the ammonia provided by the HisH subunit. In Campylobacter curvus (strain 525.92), this protein is Imidazole glycerol phosphate synthase subunit HisF.